The chain runs to 137 residues: Phosphoribosyl-AMP cyclohydrolase (137 aa).

Mg(2+) is bound at residue D84. A Zn(2+)-binding site is contributed by C85. Residues D86 and D88 each contribute to the Mg(2+) site. C101 and C108 together coordinate Zn(2+).

This sequence belongs to the PRA-CH family. Homodimer. Requires Mg(2+) as cofactor. Zn(2+) is required as a cofactor.

Its subcellular location is the cytoplasm. It carries out the reaction 1-(5-phospho-beta-D-ribosyl)-5'-AMP + H2O = 1-(5-phospho-beta-D-ribosyl)-5-[(5-phospho-beta-D-ribosylamino)methylideneamino]imidazole-4-carboxamide. The protein operates within amino-acid biosynthesis; L-histidine biosynthesis; L-histidine from 5-phospho-alpha-D-ribose 1-diphosphate: step 3/9. Its function is as follows. Catalyzes the hydrolysis of the adenine ring of phosphoribosyl-AMP. This Chlorobium limicola (strain DSM 245 / NBRC 103803 / 6330) protein is Phosphoribosyl-AMP cyclohydrolase.